A 191-amino-acid chain; its full sequence is Putative 3-methyladenine DNA glycosylase (191 aa).

The protein belongs to the DNA glycosylase MPG family.

The protein is Putative 3-methyladenine DNA glycosylase of Cutibacterium acnes (strain DSM 16379 / KPA171202) (Propionibacterium acnes).